A 426-amino-acid polypeptide reads, in one-letter code: MATAAWLLGRRVASWRMRPPLQSLAGLITQRTNSLLPVDDAVNGLNEEQKQLRQTVAKFLQEHLAPQAQEIDQSNEFKNLREFWKQLGNLGVLGITAPVQYGGSGLGFLENVLVMEEISRVSGAVGLSYGAHSNLCINQIVRNGNETQKEKYLPKLISGEYIGALAMSEPNAGSDVVSMKLKAEKKGDHYVLNGNKFWITNGPDADVLVVYAKTDVTAVPASRGITAFIVEKGMPGFSTSKKLDKLGMRGSNTCELVFEDCEVPAANILGHLGKGVYVLMSGLDLERLVLAGGPLGIMQAVLDHTIPYLHMREAFGQKIGHFQLMQGKMADMYTRLMACRQYVYNVAKACDEGHCTTKDCAGVILYSAECATQVALDGIQCLGGNGYINDFPMGRFLRDAKLYEIGAGTSEVRRLVIGRAFNADFH.

Residues Met-1–Thr-32 constitute a mitochondrion transit peptide. 2 positions are modified to N6-acetyllysine; alternate: Lys-58 and Lys-78. N6-succinyllysine; alternate occurs at positions 58 and 78. Residues Leu-165–Ser-174 and Trp-198–Thr-200 each bind FAD. Ser-174 lines the substrate pocket. Position 222-223 (Ser-222–Arg-223) interacts with substrate. Lys-241 carries the N6-acetyllysine modification. Residues Tyr-277 and Asp-284–Arg-287 each bind substrate. Residue Glu-286 is the Proton acceptor of the active site. An FAD-binding site is contributed by Arg-312. Position 318 is an N6-succinyllysine (Lys-318). Residues Gln-323 and Gln-380–Gly-384 each bind FAD. Residue Ala-407 to Gly-408 coordinates substrate. Thr-409–Glu-411 is an FAD binding site.

Belongs to the acyl-CoA dehydrogenase family. As to quaternary structure, homotetramer. Requires FAD as cofactor.

It is found in the mitochondrion matrix. It carries out the reaction 3-methylbutanoyl-CoA + oxidized [electron-transfer flavoprotein] + H(+) = 3-methylbut-2-enoyl-CoA + reduced [electron-transfer flavoprotein]. It catalyses the reaction pentanoyl-CoA + oxidized [electron-transfer flavoprotein] + H(+) = (2E)-pentenoyl-CoA + reduced [electron-transfer flavoprotein]. The enzyme catalyses hexanoyl-CoA + oxidized [electron-transfer flavoprotein] + H(+) = (2E)-hexenoyl-CoA + reduced [electron-transfer flavoprotein]. The catalysed reaction is butanoyl-CoA + oxidized [electron-transfer flavoprotein] + H(+) = (2E)-butenoyl-CoA + reduced [electron-transfer flavoprotein]. It participates in amino-acid degradation; L-leucine degradation; (S)-3-hydroxy-3-methylglutaryl-CoA from 3-isovaleryl-CoA: step 1/3. Its function is as follows. Catalyzes the conversion of isovaleryl-CoA/3-methylbutanoyl-CoA to 3-methylbut-2-enoyl-CoA as an intermediate step in the leucine (Leu) catabolic pathway. To a lesser extent, is also able to catalyze the oxidation of other saturated short-chain acyl-CoA thioesters as pentanoyl-CoA, hexenoyl-CoA and butenoyl-CoA. The polypeptide is Isovaleryl-CoA dehydrogenase, mitochondrial (IVD) (Bos taurus (Bovine)).